Consider the following 385-residue polypeptide: 4-hydroxy-3-methylbut-2-en-1-yl diphosphate synthase (flavodoxin) 2 (385 aa).

Positions 281, 284, 316, and 323 each coordinate [4Fe-4S] cluster.

Belongs to the IspG family. Requires [4Fe-4S] cluster as cofactor.

The catalysed reaction is (2E)-4-hydroxy-3-methylbut-2-enyl diphosphate + oxidized [flavodoxin] + H2O + 2 H(+) = 2-C-methyl-D-erythritol 2,4-cyclic diphosphate + reduced [flavodoxin]. Its pathway is isoprenoid biosynthesis; isopentenyl diphosphate biosynthesis via DXP pathway; isopentenyl diphosphate from 1-deoxy-D-xylulose 5-phosphate: step 5/6. Converts 2C-methyl-D-erythritol 2,4-cyclodiphosphate (ME-2,4cPP) into 1-hydroxy-2-methyl-2-(E)-butenyl 4-diphosphate. In Streptomyces avermitilis (strain ATCC 31267 / DSM 46492 / JCM 5070 / NBRC 14893 / NCIMB 12804 / NRRL 8165 / MA-4680), this protein is 4-hydroxy-3-methylbut-2-en-1-yl diphosphate synthase (flavodoxin) 2.